A 102-amino-acid chain; its full sequence is Small ribosomal subunit protein uS10 (102 aa).

It belongs to the universal ribosomal protein uS10 family. Part of the 30S ribosomal subunit.

In terms of biological role, involved in the binding of tRNA to the ribosomes. The protein is Small ribosomal subunit protein uS10 of Salinispora tropica (strain ATCC BAA-916 / DSM 44818 / JCM 13857 / NBRC 105044 / CNB-440).